The sequence spans 740 residues: MNTQTGTGTSEVSKKLKAAIRAKLEELGVYVDDELPDYIMVMIANKKEKVQMKDDLNLFIGKSTAKFVDWLFDLFDRLQNASNKQGETSKKEEDKRKELEATAAAKEHEEKRRKEKEEHEKELQKEKEREKERQRERDREKRAEEEKRREEKRKEIQRSKRRRTRSRSNTYSDEEEHVRARGEKHDRHHHKDHRRGRSHERKIITSTIVRQASASPDKKLHSTVTVKRNIRPTGDQNIKGRGTMFLRAMNEASVSAGYGSSSKRSETHHEDDMSDVEALPSKPASTKSPKKSIRDRMSRISKTSEPPIEEDDAVVLEDFAQTGGGPQMILKLSGGREAIKKTRIQDRIVVDDGLRRGLLKRKIETASGASAGAATSEEPKSKHDRIIFDITPSRDSTPTDDSPTMQKWNGQIEIGDDSEESEDDEEAEIDAFVAEARGIARRESFRDEEDELPPTHQLSGGPYAYHHSTAAPTYIPTPLSVLSEQQNQMGGGAAKEDHHVKERCIFWPKCTKGDTCAFMHPTTNCKNFPNCTFGIRCLFIHPPCRFDRFCTKKHCPFTHHGTGGQQPGGAQLTSEFKNPLTSSRMLTVPSPFIAATAAAVEELPKPAARGALGSLAEKLAASIKKKPAPGAESEKKEEKSDENESKAEEPKAEVAPVQPKPLPDIAPLHSMVLCRYAGACRNPICHFKHPKECRFGANCRNPSCYFYHKPAGAAPTPVAAPIAAESAGAAKYKWTSATAN.

Disordered stretches follow at residues 82–240 (SNKQ…NIKG), 254–314 (VSAG…DDAV), 390–426 (ITPSRDSTPTDDSPTMQKWNGQIEIGDDSEESEDDEE), and 444–469 (SFRDEEDELPPTHQLSGGPYAYHHST). Basic and acidic residues-rich tracts occupy residues 87–158 (ETSK…EIQR) and 176–185 (EHVRARGEKH). Basic residues predominate over residues 186-200 (DRHHHKDHRRGRSHE). Over residues 204–214 (ITSTIVRQASA) the composition is skewed to polar residues. Positions 393–409 (SRDSTPTDDSPTMQKWN) are enriched in polar residues. The segment covering 414 to 426 (IGDDSEESEDDEE) has biased composition (acidic residues). 2 consecutive C3H1-type zinc fingers follow at residues 499 to 522 (HVKERCIFWPKCTKGDTCAFMHPT) and 523 to 543 (TNCKNFPNCTFGIRCLFIHPP). The interval 623-661 (IKKKPAPGAESEKKEEKSDENESKAEEPKAEVAPVQPKP) is disordered. Over residues 632 to 652 (ESEKKEEKSDENESKAEEPKA) the composition is skewed to basic and acidic residues. 3 consecutive C3H1-type zinc fingers follow at residues 668-691 (LHSMVLCRYAGACRNPICHFKHPK), 674-691 (CRYAGACRNPICHFKHPK), and 693-709 (CRFGANCRNPSCYFYHK).

It belongs to the ZC3H14 family.

Its subcellular location is the nucleus. It localises to the cytoplasm. RNA-binding protein involved in the biogenesis of circular RNAs (circRNAs), which are produced by back-splicing circularization of pre-mRNAs. This Caenorhabditis elegans protein is Zinc finger CCCH domain-containing protein 14 (sut-2).